The primary structure comprises 535 residues: Calcium-dependent protein kinase 5 (535 aa).

The segment at 1-46 (MGNACRGSFGGKTFQGYPQPQDHSESNSNPKHNSDSPKPKKEQQPL) is disordered. Residue Gly-2 is the site of N-myristoyl glycine attachment. Cys-5 carries S-palmitoyl cysteine lipidation. The segment covering 32 to 43 (HNSDSPKPKKEQ) has biased composition (basic and acidic residues). Positions 72–330 (YTLGRKLGQG…AHEVLCHPWI (259 aa)) constitute a Protein kinase domain. Residues 78 to 86 (LGQGQFGTT) and Lys-101 each bind ATP. The active-site Proton acceptor is the Asp-196. The segment at 336–366 (APDRALDPAVLSRLKHFSAMNKLKKMALRVI) is autoinhibitory domain. 4 consecutive EF-hand domains span residues 373–408 (EEIA…YGST), 409–444 (LKDI…LNKL), 445–480 (DREE…HNIT), and 484–514 (FEDI…GNPC). Positions 386, 388, 390, 397, 422, 424, 426, 428, 433, 458, 460, 462, 464, 469, 492, 494, 496, 498, and 503 each coordinate Ca(2+).

It belongs to the protein kinase superfamily. Ser/Thr protein kinase family. CDPK subfamily.

Its subcellular location is the cell membrane. It carries out the reaction L-seryl-[protein] + ATP = O-phospho-L-seryl-[protein] + ADP + H(+). The catalysed reaction is L-threonyl-[protein] + ATP = O-phospho-L-threonyl-[protein] + ADP + H(+). With respect to regulation, activated by calcium. Autophosphorylation may play an important role in the regulation of the kinase activity. In terms of biological role, regulates the production of reactive oxygen species (ROS) by NADPH oxidase. This is Calcium-dependent protein kinase 5 (CPK5) from Solanum tuberosum (Potato).